We begin with the raw amino-acid sequence, 397 residues long: Elongation factor Tu (397 aa).

The tr-type G domain occupies 10–207; it reads KPHVNIGTIG…ACDSYIPEPQ (198 aa). The interval 19–26 is G1; it reads GHIDHGKT. 19-26 serves as a coordination point for GTP; sequence GHIDHGKT. Residue Thr26 participates in Mg(2+) binding. The tract at residues 60-64 is G2; that stretch reads GITIA. Positions 81-84 are G3; the sequence is DCPG. GTP contacts are provided by residues 81–85 and 136–139; these read DCPGH and NKCD. Residues 136-139 form a G4 region; sequence NKCD. The interval 174-176 is G5; the sequence is SAL.

This sequence belongs to the TRAFAC class translation factor GTPase superfamily. Classic translation factor GTPase family. EF-Tu/EF-1A subfamily. Monomer.

It is found in the cytoplasm. It carries out the reaction GTP + H2O = GDP + phosphate + H(+). In terms of biological role, GTP hydrolase that promotes the GTP-dependent binding of aminoacyl-tRNA to the A-site of ribosomes during protein biosynthesis. This Nitratidesulfovibrio vulgaris (strain DSM 19637 / Miyazaki F) (Desulfovibrio vulgaris) protein is Elongation factor Tu.